Consider the following 469-residue polypeptide: Coiled-coil domain-containing protein 6 (469 aa).

Over residues 1-10 (MADSASESDT) the composition is skewed to acidic residues. The interval 1–37 (MADSASESDTDAAGGGPAAMQSSCSATSGGSGGGGGG) is disordered. A2 carries the N-acetylalanine modification. Residue S45 is modified to Phosphoserine. Positions 47–320 (FRLEELTNRL…LCRQLSESES (274 aa)) form a coiled coil. Tandem repeats lie at residues 99–127 (EQEE…AVNY), 128–156 (EKEE…EQHL), and 157–185 (EQEQ…QLTL). Positions 99–228 (EQEEEFISNT…AEKRILQEKL (130 aa)) are 5 X 29 AA tandem repeats. The stretch at 186–199 (EQLRREKIDLENTL) is one 4; approximate repeat. Residues 200–228 (EQEQEALVNRLWKRMDKLEAEKRILQEKL) form repeat 5. 6 positions are modified to phosphoserine: S233, S237, S242, S247, S277, and S316. Residues 335–362 (AQGLRPRTVSSPIPYTPSPSSSRPISPG) form a disordered region. The residue at position 342 (T342) is a Phosphothreonine. Over residues 344 to 361 (SSPIPYTPSPSSSRPISP) the composition is skewed to low complexity. A phosphoserine mark is found at S356 and S360. R380 carries the omega-N-methylarginine modification. A phosphoserine mark is found at S388 and S406. A disordered region spans residues 394 to 469 (QHMGASHGIT…QHPVHPSSQP (76 aa)). The span at 419–444 (PTPPPSPNTQSPVQPPPPPPPPPMQP) shows a compositional bias: pro residues. The short motif at 435–444 (PPPPPPPMQP) is the SH3-binding element. The segment covering 460-469 (QHPVHPSSQP) has biased composition (low complexity).

Its subcellular location is the cytoplasm. The protein localises to the cytoskeleton. The chain is Coiled-coil domain-containing protein 6 (Ccdc6) from Mus musculus (Mouse).